The chain runs to 190 residues: Ribosome maturation factor RimM (190 aa).

The PRC barrel domain maps to 114 to 190 (DDEYYWVDLI…CITVDWQPDY (77 aa)).

This sequence belongs to the RimM family. Binds ribosomal protein uS19.

The protein localises to the cytoplasm. Its function is as follows. An accessory protein needed during the final step in the assembly of 30S ribosomal subunit, possibly for assembly of the head region. Essential for efficient processing of 16S rRNA. May be needed both before and after RbfA during the maturation of 16S rRNA. It has affinity for free ribosomal 30S subunits but not for 70S ribosomes. The polypeptide is Ribosome maturation factor RimM (Acidovorax sp. (strain JS42)).